The chain runs to 246 residues: MRHQDVAIIIPSRLSSTRLKQKPLQLIGSITLIERVFKQVNQAGLEHTYVATDSEEIASVITKVGGKVIFTDSAIPTGTNRTYEAFKLIPNNQNINYIVNVQGDMPFIEPSSILKIIEYLKNSKYDIVTPIVKVDRESVKASSNVTVAVDSAGTALYFSRSLIPNGAEEFLYHVGMYGFRKNALEKFVSLKPTFLEKTERLEQLRVLENGMTIGTCLVENVPISVDTEEDLKKAVKFYENISKLGL.

Belongs to the KdsB family.

The protein localises to the cytoplasm. It catalyses the reaction 3-deoxy-alpha-D-manno-oct-2-ulosonate + CTP = CMP-3-deoxy-beta-D-manno-octulosonate + diphosphate. It participates in nucleotide-sugar biosynthesis; CMP-3-deoxy-D-manno-octulosonate biosynthesis; CMP-3-deoxy-D-manno-octulosonate from 3-deoxy-D-manno-octulosonate and CTP: step 1/1. Its pathway is bacterial outer membrane biogenesis; lipopolysaccharide biosynthesis. Its function is as follows. Activates KDO (a required 8-carbon sugar) for incorporation into bacterial lipopolysaccharide in Gram-negative bacteria. In Rickettsia peacockii (strain Rustic), this protein is 3-deoxy-manno-octulosonate cytidylyltransferase.